The sequence spans 576 residues: MKAGERPKLVRGVRQESRRFRLLVIVVGFFLVSLTFVFVSKPDAILFSLNGKLPVEQAPTSILIQQKVNEPSGESRKTSTDALRGDPKVVDDEADAKPKGTGGGSEEEEGRVLSEPDPTSGMMEPTHNKDGNGHKSHQETLGGGGDGESKGNDEEGEHAEQKHKVTLPTVSNYTIHDAAEDTENAKQEGMNNVQQGSKPLCDFSNFRANVCEMRGDVRIHPTATSVLFMEPEGSQRDEVWKIKPYPRKGDEFCLSHITEVTVKSSKVAPECTKYHDVPAVIFSLTGYTGNLFHDFTDVLVPLFTTASEFNGEVQFLITDMALWWTIKYQTVLQKLSKYPVIDFSKDDQVHCFKHAIVGLHAYMEFTIDSTKAPHNYSMADFNRFMRGAYSLGRDSVTVLGEYPKIKPRLLIIKRHRTRMFLNLDEIISMAEELGFEVVIDEANVSSDISRFARLVNSVDVMMGVHGAGLTNCVFLPQHATLIQIVPWGGLDWISRTDFGNPAELMGLRYKQYSIGVDESSLTDQYPRDHEIFKNPISFHQRGFDFIRQTFMDKQNVKLDCKRFRPILLEALDNLNP.

Topologically, residues 1 to 19 (MKAGERPKLVRGVRQESRR) are cytoplasmic. Residues 20–40 (FRLLVIVVGFFLVSLTFVFVS) form a helical; Signal-anchor for type II membrane protein membrane-spanning segment. At 41 to 576 (KPDAILFSLN…LLEALDNLNP (536 aa)) the chain is on the lumenal side. The segment at 64 to 171 (IQQKVNEPSG…KHKVTLPTVS (108 aa)) is disordered. Basic and acidic residues-rich tracts occupy residues 73-98 (GESRKTSTDALRGDPKVVDDEADAKP), 126-138 (THNKDGNGHKSHQ), and 147-163 (GESKGNDEEGEHAEQKH). Residues Asn172, Asn375, and Asn443 are each glycosylated (N-linked (GlcNAc...) asparagine).

The protein belongs to the glycosyltransferase 61 family.

The protein resides in the golgi apparatus membrane. The protein operates within glycan metabolism. Functionally, glycosyltransferase involved in the arabinosylation of xylan, the major hemicellulose (non-cellulosic component) of primary and secondary walls of angiosperms. Possesses alpha-1,3-arabinosyltransferase activity, transferring an arabinofuranose residue to the xylan backbone. The sequence is that of Alpha-1,3-arabinosyltransferase XAT3 from Oryza sativa subsp. japonica (Rice).